Here is a 328-residue protein sequence, read N- to C-terminus: DNA-directed RNA polymerase subunit alpha 1 (328 aa).

Positions 1–234 (MQGFVKDFLK…GQLDEFVDER (234 aa)) are alpha N-terminal domain (alpha-NTD). An alpha C-terminal domain (alpha-CTD) region spans residues 248–328 (FDPILLRPVN…NWPPASLIED (81 aa)).

It belongs to the RNA polymerase alpha chain family. As to quaternary structure, homodimer. The RNAP catalytic core consists of 2 alpha, 1 beta, 1 beta' and 1 omega subunit. When a sigma factor is associated with the core the holoenzyme is formed, which can initiate transcription.

The catalysed reaction is RNA(n) + a ribonucleoside 5'-triphosphate = RNA(n+1) + diphosphate. Functionally, DNA-dependent RNA polymerase catalyzes the transcription of DNA into RNA using the four ribonucleoside triphosphates as substrates. This chain is DNA-directed RNA polymerase subunit alpha 1, found in Psychromonas ingrahamii (strain DSM 17664 / CCUG 51855 / 37).